Reading from the N-terminus, the 348-residue chain is 4-hydroxyphenylpyruvate dioxygenase (348 aa).

2 VOC domains span residues 11–141 (GFAF…ITSP) and 151–303 (AIDH…IFTE). Positions 154, 232, and 312 each coordinate Fe cation.

The protein belongs to the 4HPPD family. Fe cation serves as cofactor.

It catalyses the reaction 3-(4-hydroxyphenyl)pyruvate + O2 = homogentisate + CO2. Its function is as follows. Catalyzes the transformation of p-hydroxyphenylpyruvate into HGA. Has hemolytic and brown pigment production activity. This chain is 4-hydroxyphenylpyruvate dioxygenase (lly), found in Legionella pneumophila subsp. pneumophila (strain Philadelphia 1 / ATCC 33152 / DSM 7513).